We begin with the raw amino-acid sequence, 290 residues long: MAFTLGGRARRLVSATSVHQNGCLHKLQQIGSDRFQLGEAKAIRLLPRRTNMVQELGIREEFMDLNRETETSYDFLDEMRHRFLKFKRQKYLPEIEKFKALAIAQSPKVMVIGCADSRVCPSYVLGFQPGEAFTIRNVANLVTPVQNGPTETNSALEFAVTTLQVENIIVMGHSNCGGIAALMSHQNHQGQHSSLVERWVMNGKAAKLRTQLASSHLSFDEQCRNCEKESIKDSVMNLITYSWIRDRVKRGEVKIHGCYYNLSDCSLEKWRLSSDKTNYGFYISDREIWS.

Residues 1-20 (MAFTLGGRARRLVSATSVHQ) constitute a mitochondrion transit peptide. S122 carries the phosphoserine modification. C226 is subject to S-nitrosocysteine.

The protein belongs to the beta-class carbonic anhydrase family. Strongly expressed in aerial tissues including leaves, stems, flowers and siliques, and, to a lower extent, in roots. Accumulates in guard cells.

It localises to the mitochondrion. It catalyses the reaction hydrogencarbonate + H(+) = CO2 + H2O. Reversible hydration of carbon dioxide. The polypeptide is Beta carbonic anhydrase 6, mitochondrial (BCA6) (Arabidopsis thaliana (Mouse-ear cress)).